The primary structure comprises 461 residues: Thyroid hormone receptor beta (461 aa).

The tract at residues 1-24 (MTPNSMTENRLPAWDKQKPHPDRG) is disordered. Residues 1 to 106 (MTPNSMTENR…IPSYLDKDEL (106 aa)) form a modulating region. Basic and acidic residues predominate over residues 13 to 24 (AWDKQKPHPDRG). The Zn(2+) site is built by Cys-107, Cys-110, Cys-124, Cys-127, Cys-145, Cys-151, Cys-161, and Cys-164. NR C4-type zinc fingers lie at residues 107–127 (CVVC…CEGC) and 145–169 (CKYE…FKKC). A DNA-binding region (nuclear receptor) is located at residues 107–181 (CVVCGDKATG…VGMATDLVLD (75 aa)). In terms of domain architecture, NR LBD spans 217-461 (EEWELIKTVT…PPLFLEVFED (245 aa)). Positions 244–461 (KFLPEDIGQA…PPLFLEVFED (218 aa)) are interaction with NR2F6. Residues Arg-282, Asn-331, and His-435 each contribute to the 3,3',5-triiodo-L-thyronine site. L-thyroxine is bound by residues Arg-282, Asn-331, and His-435.

This sequence belongs to the nuclear hormone receptor family. NR1 subfamily. As to quaternary structure, binds DNA as a dimer; homodimer and heterodimer with RXRA. Interacts with the coactivators NCOA1/SRC1, NCOA2/GRIP1, NCOA7 and MED1/TRAP220 in a ligand-inducible manner. Interacts with the corepressor NCOR1 in absence of ligand. Interacts with C1D. Interacts with NR2F6; the interaction impairs the binding of the THRB homodimer and THRB:RXRB heterodimer to T3 response elements. Interacts with PRMT2 and THRSP. Interacts with TACC1; this interaction is decreased in the presence of thyroid hormone T3.

It is found in the nucleus. Its function is as follows. Nuclear hormone receptor that can act as a repressor or activator of transcription. High affinity receptor for thyroid hormones, including triiodothyronine and thyroxine. This Rattus norvegicus (Rat) protein is Thyroid hormone receptor beta (Thrb).